The sequence spans 88 residues: Small ribosomal subunit protein uS17 (88 aa).

Belongs to the universal ribosomal protein uS17 family. Part of the 30S ribosomal subunit.

Its function is as follows. One of the primary rRNA binding proteins, it binds specifically to the 5'-end of 16S ribosomal RNA. In Stutzerimonas stutzeri (strain A1501) (Pseudomonas stutzeri), this protein is Small ribosomal subunit protein uS17.